A 98-amino-acid polypeptide reads, in one-letter code: U10-barytoxin-Tl1a (98 aa).

The first 21 residues, 1 to 21 (MKTLVLVAVLGVASLYLLSSA), serve as a signal peptide directing secretion. The propeptide occupies 22–50 (SEVQQLSPAEEEFRAFVSTFGGLFETEER). Disulfide bonds link Cys-57-Cys-71, Cys-64-Cys-76, and Cys-70-Cys-89.

Belongs to the neurotoxin 10 (Hwtx-1) family. 27 (ICK-3) subfamily. In terms of tissue distribution, expressed by the venom gland.

Its subcellular location is the secreted. Ion channel inhibitor. This Trittame loki (Brush-footed trapdoor spider) protein is U10-barytoxin-Tl1a.